A 365-amino-acid chain; its full sequence is Aminomethyltransferase (365 aa).

The protein belongs to the GcvT family. As to quaternary structure, the glycine cleavage system is composed of four proteins: P, T, L and H.

The enzyme catalyses N(6)-[(R)-S(8)-aminomethyldihydrolipoyl]-L-lysyl-[protein] + (6S)-5,6,7,8-tetrahydrofolate = N(6)-[(R)-dihydrolipoyl]-L-lysyl-[protein] + (6R)-5,10-methylene-5,6,7,8-tetrahydrofolate + NH4(+). Functionally, the glycine cleavage system catalyzes the degradation of glycine. The polypeptide is Aminomethyltransferase (Desulfitobacterium hafniense (strain DSM 10664 / DCB-2)).